Reading from the N-terminus, the 485-residue chain is Glycogen synthase (485 aa).

Lys-20 serves as a coordination point for ADP-alpha-D-glucose.

This sequence belongs to the glycosyltransferase 1 family. Bacterial/plant glycogen synthase subfamily.

It catalyses the reaction [(1-&gt;4)-alpha-D-glucosyl](n) + ADP-alpha-D-glucose = [(1-&gt;4)-alpha-D-glucosyl](n+1) + ADP + H(+). The protein operates within glycan biosynthesis; glycogen biosynthesis. In terms of biological role, synthesizes alpha-1,4-glucan chains using ADP-glucose. This chain is Glycogen synthase, found in Vibrio vulnificus (strain CMCP6).